Here is a 219-residue protein sequence, read N- to C-terminus: Cytidylate kinase (219 aa).

11–19 (GTAGSGKTA) contributes to the ATP binding site.

This sequence belongs to the cytidylate kinase family. Type 1 subfamily.

The protein resides in the cytoplasm. The enzyme catalyses CMP + ATP = CDP + ADP. It catalyses the reaction dCMP + ATP = dCDP + ADP. The polypeptide is Cytidylate kinase (Mesoplasma florum (strain ATCC 33453 / NBRC 100688 / NCTC 11704 / L1) (Acholeplasma florum)).